A 153-amino-acid polypeptide reads, in one-letter code: Putative adenylate kinase (153 aa).

Residues Gly12, Gly14, Lys15, Ser16, and Thr17 each contribute to the ATP site. The tract at residues 31-47 (EGNELAKEYGCLFDEEV) is NMP. Residues 94–104 (ARGYSEEKIQE) form an LID region. Position 95 (Arg95) interacts with ATP.

This sequence belongs to the adenylate kinase family. AK6 subfamily. As to quaternary structure, interacts with uS11. Not a structural component of 40S pre-ribosomes, but transiently interacts with them by binding to uS11.

It carries out the reaction AMP + ATP = 2 ADP. The enzyme catalyses ATP + H2O = ADP + phosphate + H(+). Broad-specificity nucleoside monophosphate (NMP) kinase that catalyzes the reversible transfer of the terminal phosphate group between nucleoside triphosphates and monophosphates. Also has ATPase activity. Involved in the late maturation steps of the 30S ribosomal particles, specifically 16S rRNA maturation. While NMP activity is not required for ribosome maturation, ATPase activity is. Associates transiently with small ribosomal subunit protein uS11. ATP hydrolysis breaks the interaction with uS11. May temporarily remove uS11 from the ribosome to enable a conformational change of the ribosomal RNA that is needed for the final maturation step of the small ribosomal subunit. The protein is Putative adenylate kinase of Thermoplasma volcanium (strain ATCC 51530 / DSM 4299 / JCM 9571 / NBRC 15438 / GSS1).